The following is a 280-amino-acid chain: Fructose-1,6-bisphosphatase class 1 (280 aa).

Residues Glu-64, Asp-83, Leu-85, and Asp-86 each coordinate Mg(2+). Residues 86–89 (DGSS), Tyr-189, and Lys-220 each bind substrate. Residue Glu-226 coordinates Mg(2+).

Belongs to the FBPase class 1 family. Homotetramer. Mg(2+) is required as a cofactor.

Its subcellular location is the cytoplasm. It catalyses the reaction beta-D-fructose 1,6-bisphosphate + H2O = beta-D-fructose 6-phosphate + phosphate. It functions in the pathway carbohydrate biosynthesis; gluconeogenesis. This Campylobacter jejuni subsp. jejuni serotype O:2 (strain ATCC 700819 / NCTC 11168) protein is Fructose-1,6-bisphosphatase class 1.